The following is a 576-amino-acid chain: Adenine deaminase 2 (576 aa).

It belongs to the metallo-dependent hydrolases superfamily. Adenine deaminase family. Mn(2+) is required as a cofactor.

The enzyme catalyses adenine + H2O + H(+) = hypoxanthine + NH4(+). This chain is Adenine deaminase 2, found in Desulfotalea psychrophila (strain LSv54 / DSM 12343).